A 318-amino-acid polypeptide reads, in one-letter code: Solute carrier family 25 member 34 (318 aa).

Solcar repeat units lie at residues valine 18–alanine 111, glutamine 115–tryptophan 208, and aspartate 218–leucine 309. Transmembrane regions (helical) follow at residues alanine 21 to leucine 41, threonine 59 to glycine 79, glycine 112 to valine 134, valine 184 to alanine 205, tryptophan 220 to proline 240, and leucine 292 to histidine 315.

Belongs to the mitochondrial carrier (TC 2.A.29) family.

It localises to the mitochondrion inner membrane. It carries out the reaction a dicarboxylate(in) + sulfate(out) = a dicarboxylate(out) + sulfate(in). Functionally, putative antiporter that exchanges dicarboxylates and sulfur oxoanions across the inner membrane of mitochondria. The polypeptide is Solute carrier family 25 member 34 (Slc25a34) (Rattus norvegicus (Rat)).